A 195-amino-acid polypeptide reads, in one-letter code: Holliday junction branch migration complex subunit RuvA (195 aa).

The segment at M1–S64 is domain I. Residues D65 to A139 are domain II. The tract at residues A139 to T143 is flexible linker. The domain III stretch occupies residues S144–A195.

This sequence belongs to the RuvA family. In terms of assembly, homotetramer. Forms an RuvA(8)-RuvB(12)-Holliday junction (HJ) complex. HJ DNA is sandwiched between 2 RuvA tetramers; dsDNA enters through RuvA and exits via RuvB. An RuvB hexamer assembles on each DNA strand where it exits the tetramer. Each RuvB hexamer is contacted by two RuvA subunits (via domain III) on 2 adjacent RuvB subunits; this complex drives branch migration. In the full resolvosome a probable DNA-RuvA(4)-RuvB(12)-RuvC(2) complex forms which resolves the HJ.

It is found in the cytoplasm. The RuvA-RuvB-RuvC complex processes Holliday junction (HJ) DNA during genetic recombination and DNA repair, while the RuvA-RuvB complex plays an important role in the rescue of blocked DNA replication forks via replication fork reversal (RFR). RuvA specifically binds to HJ cruciform DNA, conferring on it an open structure. The RuvB hexamer acts as an ATP-dependent pump, pulling dsDNA into and through the RuvAB complex. HJ branch migration allows RuvC to scan DNA until it finds its consensus sequence, where it cleaves and resolves the cruciform DNA. The sequence is that of Holliday junction branch migration complex subunit RuvA from Chloroflexus aggregans (strain MD-66 / DSM 9485).